The sequence spans 315 residues: MRLVFAGTPEPAVVALQKLIDSEHEVVAVLTQPDARRGRGRTLHPSAVAELAQAHGIEVIKPTSLKADTGDGRLVRQRLAELQPDCLPVVAFGQLITRDLLDVAPHGWVNLHFSLLPAWRGAAPVQAAIRAGDQLTGATCFRIDEGLDTGVILSTLEETIQPTDTADDLLTRLAYAGADLLVDTMTGLEAGTISPREQTGEATYAPKITTVDARIDWTVPAEVIDRHIRAHTPGPGAWTMLDDARLKVGPLVTVTDLPDVPTLNPGALHATRDAVYVGTGSTPVALGQIQPPGKKMMNAADWARGVHLDQEASFE.

Residue 114–117 (SLLP) participates in (6S)-5,6,7,8-tetrahydrofolate binding.

The protein belongs to the Fmt family.

It carries out the reaction L-methionyl-tRNA(fMet) + (6R)-10-formyltetrahydrofolate = N-formyl-L-methionyl-tRNA(fMet) + (6S)-5,6,7,8-tetrahydrofolate + H(+). Functionally, attaches a formyl group to the free amino group of methionyl-tRNA(fMet). The formyl group appears to play a dual role in the initiator identity of N-formylmethionyl-tRNA by promoting its recognition by IF2 and preventing the misappropriation of this tRNA by the elongation apparatus. The polypeptide is Methionyl-tRNA formyltransferase (Corynebacterium efficiens (strain DSM 44549 / YS-314 / AJ 12310 / JCM 11189 / NBRC 100395)).